Reading from the N-terminus, the 434-residue chain is Serine/threonine-protein kinase Sgk1-B (434 aa).

Residues 68 to 94 (ESELLNENSSPPPSHSQQINLGPSSNP) form a disordered region. A Protein kinase domain is found at 101–358 (FQFLKIIGKG…FMEIKNHIFF (258 aa)). ATP is bound by residues 107–115 (IGKGSFGKV) and K130. D225 functions as the Proton acceptor in the catalytic mechanism. The AGC-kinase C-terminal domain occupies 359-434 (SPIDWDDLIN…SYAPPMDSYL (76 aa)).

This sequence belongs to the protein kinase superfamily. AGC Ser/Thr protein kinase family.

Its subcellular location is the cytoplasm. It is found in the nucleus. The protein resides in the endoplasmic reticulum. It carries out the reaction L-seryl-[protein] + ATP = O-phospho-L-seryl-[protein] + ADP + H(+). The enzyme catalyses L-threonyl-[protein] + ATP = O-phospho-L-threonyl-[protein] + ADP + H(+). In terms of biological role, protein kinase that may play an important role in cellular stress response. Plays an important role in activating certain potassium, sodium, and chloride channels, suggesting an involvement in the regulation of processes such as cell survival, neuronal excitability and renal sodium excretion. This chain is Serine/threonine-protein kinase Sgk1-B (sgk1-b), found in Xenopus laevis (African clawed frog).